The chain runs to 186 residues: MASPNKAVIVPGNGGGDVATHGWYGWVKKGLEQIPGFQCLAKNMPDPITARESIWLPFMETELHCDEKTIIIGHSSGAIAAMRYAETHQVYALVLVSAYTSDLGDENERASGYFSRPWQWEKIKANCPHIVQFGSTDDPFLPWKEQQEVADRLDAKLYKFTDRGHFQNTEFHELISVVKSMLKGPE.

Residues 56-70 (LPFMETELHCDEKTI) form a retinoblastoma protein binding region. The tract at residues 63–67 (LHCDE) is involved in binding to RB1. Active-site charge relay system residues include Ser75, Asp138, and His165.

Belongs to the RBBP9 family. In terms of assembly, interacts with RB1; the interaction disrupts RB1 binding to E2F1. Interacts with RBL1 and RBL2. Expressed in spleen.

The catalysed reaction is valacyclovir + H2O = acyclovir + L-valine + H(+). In terms of biological role, serine hydrolase. Catalyzes the hydrolytic activation of amino acid ester of the antiviral prodrug valacyclovir to its corresponding active drug, acyclovir. May negatively regulate basal or autocrine TGF-beta signaling by suppressing SMAD2-SMAD3 phosphorylation. May play a role in the transformation process due to its capacity to confer resistance to the growth-inhibitory effects of TGF-beta through interaction with RB1 and the subsequent displacement of E2F1. This chain is Serine hydrolase RBBP9 (Rbbp9), found in Mus musculus (Mouse).